The sequence spans 668 residues: tRNA 5-methylaminomethyl-2-thiouridine biosynthesis bifunctional protein MnmC (668 aa).

A tRNA (mnm(5)s(2)U34)-methyltransferase region spans residues 1 to 245 (MKHYAIQPAN…KREMLCGVME (245 aa)). Residues 270-668 (IGGGIASALL…LLKGKAVKAG (399 aa)) are FAD-dependent cmnm(5)s(2)U34 oxidoreductase.

This sequence in the N-terminal section; belongs to the methyltransferase superfamily. tRNA (mnm(5)s(2)U34)-methyltransferase family. The protein in the C-terminal section; belongs to the DAO family. It depends on FAD as a cofactor.

The protein localises to the cytoplasm. It carries out the reaction 5-aminomethyl-2-thiouridine(34) in tRNA + S-adenosyl-L-methionine = 5-methylaminomethyl-2-thiouridine(34) in tRNA + S-adenosyl-L-homocysteine + H(+). In terms of biological role, catalyzes the last two steps in the biosynthesis of 5-methylaminomethyl-2-thiouridine (mnm(5)s(2)U) at the wobble position (U34) in tRNA. Catalyzes the FAD-dependent demodification of cmnm(5)s(2)U34 to nm(5)s(2)U34, followed by the transfer of a methyl group from S-adenosyl-L-methionine to nm(5)s(2)U34, to form mnm(5)s(2)U34. The sequence is that of tRNA 5-methylaminomethyl-2-thiouridine biosynthesis bifunctional protein MnmC from Escherichia coli O139:H28 (strain E24377A / ETEC).